Reading from the N-terminus, the 369-residue chain is Translocating chain-associated membrane protein 1-like 1 (369 aa).

Topologically, residues 1 to 29 (MGLRKKSTKNPPVLSQEFILQNHADIVSC) are cytoplasmic. A helical transmembrane segment spans residues 30–50 (VGMFFLLGLVFEGTAEASIVF). The Lumenal segment spans residues 51–81 (LTLQHSVAVPAAEEQATGSKSLYYYGVKDLA). A helical membrane pass occupies residues 82-102 (TVFFYMLVAIIIHATIQEYVL). The Cytoplasmic segment spans residues 103 to 121 (DKINKRMQFTKAKQNKFNE). The 210-residue stretch at 117–326 (NKFNESGQFS…TLWLQRWVED (210 aa)) folds into the TLC domain. The chain crosses the membrane as a helical span at residues 122-142 (SGQFSVFYFFSCIWGTFILIS). Residues 143–164 (ENCLSDPTLIWKARPHSMMTFQ) lie on the Lumenal side of the membrane. Residues 165-185 (MKFFYISQLAYWFHAFPELYF) traverse the membrane as a helical segment. Residues 186–196 (QKTKKQDIPRQ) are Cytoplasmic-facing. A helical transmembrane segment spans residues 197–215 (LVYIGLHLFHITGAYLLYL). Residues 216–219 (NHLG) are Lumenal-facing. A helical transmembrane segment spans residues 220 to 242 (LLLLVLHYFVELLSHMCGLFYFS). Residues 243-249 (DEKYQKG) lie on the Cytoplasmic side of the membrane. A helical transmembrane segment spans residues 250–270 (ISLWAIVFILGRLVTLIVSVL). The Lumenal segment spans residues 271–297 (TVGFHLAGSQNRNPDALTGNVNVLAAK). A helical transmembrane segment spans residues 298–318 (IAVLSSSCTIQAYVTWNLITL). Residues 319 to 369 (WLQRWVEDSNIQASCMKKKRSRSSKKRTENGVGVETSNRVDCPPKRKEKSS) are Cytoplasmic-facing. Residues 335 to 369 (KKKRSRSSKKRTENGVGVETSNRVDCPPKRKEKSS) form a disordered region. Residues 360–369 (CPPKRKEKSS) are compositionally biased toward basic and acidic residues.

This sequence belongs to the TRAM family.

Its subcellular location is the endoplasmic reticulum membrane. Stimulatory or required for the translocation of secretory proteins across the ER membrane. In Homo sapiens (Human), this protein is Translocating chain-associated membrane protein 1-like 1 (TRAM1L1).